A 340-amino-acid polypeptide reads, in one-letter code: Ketol-acid reductoisomerase (NADP(+)) (340 aa).

The region spanning 3-182 (VQMEYEKDVK…GAARVGLLET (180 aa)) is the KARI N-terminal Rossmann domain. Residues 26-29 (YGSQ), R49, S53, and 83-86 (DEIQ) contribute to the NADP(+) site. The active site involves H108. G134 provides a ligand contact to NADP(+). Residues 183–328 (TYKEETEEDL…AELRKAMPFV (146 aa)) enclose the KARI C-terminal knotted domain. Mg(2+) contacts are provided by D191, E195, E227, and E231. Position 252 (S252) interacts with substrate.

The protein belongs to the ketol-acid reductoisomerase family. Mg(2+) is required as a cofactor.

It carries out the reaction (2R)-2,3-dihydroxy-3-methylbutanoate + NADP(+) = (2S)-2-acetolactate + NADPH + H(+). It catalyses the reaction (2R,3R)-2,3-dihydroxy-3-methylpentanoate + NADP(+) = (S)-2-ethyl-2-hydroxy-3-oxobutanoate + NADPH + H(+). The protein operates within amino-acid biosynthesis; L-isoleucine biosynthesis; L-isoleucine from 2-oxobutanoate: step 2/4. It participates in amino-acid biosynthesis; L-valine biosynthesis; L-valine from pyruvate: step 2/4. Involved in the biosynthesis of branched-chain amino acids (BCAA). Catalyzes an alkyl-migration followed by a ketol-acid reduction of (S)-2-acetolactate (S2AL) to yield (R)-2,3-dihydroxy-isovalerate. In the isomerase reaction, S2AL is rearranged via a Mg-dependent methyl migration to produce 3-hydroxy-3-methyl-2-ketobutyrate (HMKB). In the reductase reaction, this 2-ketoacid undergoes a metal-dependent reduction by NADPH to yield (R)-2,3-dihydroxy-isovalerate. This is Ketol-acid reductoisomerase (NADP(+)) from Streptococcus pneumoniae (strain Hungary19A-6).